Consider the following 168-residue polypeptide: Small ribosomal subunit protein uS5 (168 aa).

The S5 DRBM domain maps to 14–77; it reads FEERVVSINR…EAAKKNLITV (64 aa).

Belongs to the universal ribosomal protein uS5 family. Part of the 30S ribosomal subunit. Contacts proteins S4 and S8.

In terms of biological role, with S4 and S12 plays an important role in translational accuracy. Located at the back of the 30S subunit body where it stabilizes the conformation of the head with respect to the body. In Lactococcus lactis subsp. cremoris (strain MG1363), this protein is Small ribosomal subunit protein uS5.